The chain runs to 132 residues: Putative nickel-responsive regulator (132 aa).

His-77, His-88, His-90, and Cys-96 together coordinate Ni(2+).

This sequence belongs to the transcriptional regulatory CopG/NikR family. It depends on Ni(2+) as a cofactor.

Transcriptional regulator. The chain is Putative nickel-responsive regulator from Brucella abortus (strain S19).